The chain runs to 339 residues: DNA-directed RNA polymerase subunit alpha (339 aa).

Residues 1 to 233 (MVREEVAGST…DLFLPFLHAE (233 aa)) are alpha N-terminal domain (alpha-NTD). Residues 264 to 339 (KKGIPLNCIF…IDLLKNKLSF (76 aa)) form an alpha C-terminal domain (alpha-CTD) region.

This sequence belongs to the RNA polymerase alpha chain family. In plastids the minimal PEP RNA polymerase catalytic core is composed of four subunits: alpha, beta, beta', and beta''. When a (nuclear-encoded) sigma factor is associated with the core the holoenzyme is formed, which can initiate transcription.

The protein resides in the plastid. It is found in the chloroplast. The enzyme catalyses RNA(n) + a ribonucleoside 5'-triphosphate = RNA(n+1) + diphosphate. DNA-dependent RNA polymerase catalyzes the transcription of DNA into RNA using the four ribonucleoside triphosphates as substrates. This is DNA-directed RNA polymerase subunit alpha from Secale strictum (Mountain rye).